The primary structure comprises 798 residues: Probable serine/threonine-protein kinase DDB_G0276461 (798 aa).

Positions 54–324 constitute a Protein kinase domain; it reads VTEVKLVAEG…DLLNYLNEIR (271 aa). ATP contacts are provided by residues 60 to 68 and lysine 82; that span reads VAEGGFGFV. Catalysis depends on aspartate 185, which acts as the Proton acceptor. 3 disordered regions span residues 330-538, 553-645, and 659-798; these read GLQT…NGNF, TNGS…SYNN, and SSAS…FGIL. Low complexity-rich tracts occupy residues 335-406, 429-490, 506-538, 557-603, 611-642, and 659-678; these read SSNN…NTPN, SNSN…NNNN, PSPS…NGNF, TNFE…INNS, SSGS…NSGS, and SSAS…NSWN. Residues 679–697 are compositionally biased toward polar residues; sequence VTLTPSQSNKNSTGNLKPL. Low complexity predominate over residues 698-716; that stretch reads NNNNNNNNNNNNRFANNTN. Over residues 717-769 the composition is skewed to polar residues; that stretch reads SSRDYSFDFSSPNTSNNNDFGSFVQPSSSSSLNTTHFSKPNYNVNLNQTTSMT. Low complexity predominate over residues 770-790; the sequence is NNYNNNNYNNNNNSNNNNNNS.

Belongs to the protein kinase superfamily. Ser/Thr protein kinase family.

It catalyses the reaction L-seryl-[protein] + ATP = O-phospho-L-seryl-[protein] + ADP + H(+). The catalysed reaction is L-threonyl-[protein] + ATP = O-phospho-L-threonyl-[protein] + ADP + H(+). The chain is Probable serine/threonine-protein kinase DDB_G0276461 from Dictyostelium discoideum (Social amoeba).